A 266-amino-acid polypeptide reads, in one-letter code: Secreted RxLR effector protein 128 (266 aa).

Positions 1-18 (MRGAFYTAIALLIGRSQT) are cleaved as a signal peptide. Positions 48–63 (RYLRDGLAHSATNEER) match the RxLR-dEER motif.

The protein belongs to the RxLR effector family.

Its subcellular location is the secreted. The protein resides in the host nucleus. Its function is as follows. Secreted effector that dos not suppress the host cell death induced by cell death-inducing proteins. The protein is Secreted RxLR effector protein 128 of Plasmopara viticola (Downy mildew of grapevine).